We begin with the raw amino-acid sequence, 84 residues long: MTDAANPPADISALSFEEALSQLERIVQELESGQAALERSIDIYERGAALKAHCEKKLEAARLKVEKIVLGQGGAVAAEPAEFN.

Belongs to the XseB family. As to quaternary structure, heterooligomer composed of large and small subunits.

It localises to the cytoplasm. It catalyses the reaction Exonucleolytic cleavage in either 5'- to 3'- or 3'- to 5'-direction to yield nucleoside 5'-phosphates.. Functionally, bidirectionally degrades single-stranded DNA into large acid-insoluble oligonucleotides, which are then degraded further into small acid-soluble oligonucleotides. The sequence is that of Exodeoxyribonuclease 7 small subunit from Caulobacter vibrioides (strain ATCC 19089 / CIP 103742 / CB 15) (Caulobacter crescentus).